The primary structure comprises 435 residues: Dual specificity mitogen-activated protein kinase kinase jkk-1 (435 aa).

Residues 35–49 (RDRRSTSVDQKHKEC) show a composition bias toward basic and acidic residues. Positions 35–90 (RDRRSTSVDQKHKECSSTSSSPQHQRPNNIGYLTSPMERKFTPLSMKPSPSRRDTE) are disordered. Over residues 50 to 66 (SSTSSSPQHQRPNNIGY) the composition is skewed to polar residues. Positions 122 to 385 (IHIISLLGSG…YRQLMKHDFY (264 aa)) constitute a Protein kinase domain. Residues 128-136 (LGSGSCGVV) and K149 contribute to the ATP site. Catalysis depends on D246, which acts as the Proton acceptor.

Belongs to the protein kinase superfamily. STE Ser/Thr protein kinase family. MAP kinase kinase subfamily. In terms of assembly, interacts with unc-16. It depends on Mg(2+) as a cofactor. As to expression, expressed in most neurons, including nerve ring, head ganglions, dorsal and ventral nerve cords and tail ganglions.

It localises to the cytoplasm. Its subcellular location is the perikaryon. The protein localises to the cell projection. The protein resides in the axon. The enzyme catalyses L-seryl-[protein] + ATP = O-phospho-L-seryl-[protein] + ADP + H(+). The catalysed reaction is L-threonyl-[protein] + ATP = O-phospho-L-threonyl-[protein] + ADP + H(+). It catalyses the reaction L-tyrosyl-[protein] + ATP = O-phospho-L-tyrosyl-[protein] + ADP + H(+). Its function is as follows. Dual specificity protein kinase which acts as an essential component of the JNK signal transduction pathway. May phosphorylate jnk-1. Plays a role in coordinating locomotion via D-type GABAergic motoneurons and in regulating synaptic vesicle transport downstream of adapter protein unc-16 and probably by activating jnk-1. Positively regulates lifespan. Upon environmental stress such as heat stress regulates daf-16 nuclear translocation probably by activating jnk-1. Regulates germline cell apoptosis in response to heavy metals such as Cu(2+) and to arsenite. The polypeptide is Dual specificity mitogen-activated protein kinase kinase jkk-1 (Caenorhabditis elegans).